A 548-amino-acid polypeptide reads, in one-letter code: MAAKDVKFGNDARVKMLRGVNVLADAVKVTLGPKGRNVVLDKSFGAPVITKDGVSVAREIELEDKFENMGAQMVKEVASKANDAAGDGTTTATVLAQSIVNEGLKAVAAGMNPMDLKRGIDKAVIAAVEELKKLSVPCSDSKAIAQVGTISANADETVGTLIAEAMAKVGKEGVITVEEGSGLQDELDVVEGMQFDRGYLSPYFVNKPETGAVELESPFILLADKKISNIREMLPVLEAVAKAGKPLLIIAEDVEGEALATLVVNTMRGIVKIAAVKAPGFGDRRKAMLQDIAILTAGTVISEEIGLELEKATLEDMGQAKRVVITKDTTTIIDGEGDKALIDSRVTQINQQRDEATSDYDREKLQERVAKLAGGVAVIKVGAATEVEMKEKKARVEDALHATRAAVEEGVVAGGGVALIRVANRIAELRGDNEDQNVGIKVARRAMEAPLRQIVANAGEEPSVIANKVKAGEGNTGYNAATEEYGNMIDMGILDPTKVTRSALQYAASIAGLMITTECMVTDLPKEDKPDLGGAGGMGGMGGMGGMM.

ATP contacts are provided by residues 30 to 33 (TLGP), K51, 87 to 91 (DGTTT), G415, 479 to 481 (NAA), and D495.

Belongs to the chaperonin (HSP60) family. As to quaternary structure, forms a cylinder of 14 subunits composed of two heptameric rings stacked back-to-back. Interacts with the co-chaperonin GroES.

It localises to the cytoplasm. The catalysed reaction is ATP + H2O + a folded polypeptide = ADP + phosphate + an unfolded polypeptide.. In terms of biological role, together with its co-chaperonin GroES, plays an essential role in assisting protein folding. The GroEL-GroES system forms a nano-cage that allows encapsulation of the non-native substrate proteins and provides a physical environment optimized to promote and accelerate protein folding. The polypeptide is Chaperonin GroEL (Sodalis glossinidius (strain morsitans)).